We begin with the raw amino-acid sequence, 185 residues long: Acireductone dioxygenase (185 aa).

Fe(2+) contacts are provided by H96, H98, E102, and H140. The Ni(2+) site is built by H96, H98, E102, and H140.

This sequence belongs to the acireductone dioxygenase (ARD) family. In terms of assembly, monomer. Requires Fe(2+) as cofactor. Ni(2+) is required as a cofactor.

The catalysed reaction is 1,2-dihydroxy-5-(methylsulfanyl)pent-1-en-3-one + O2 = 3-(methylsulfanyl)propanoate + CO + formate + 2 H(+). The enzyme catalyses 1,2-dihydroxy-5-(methylsulfanyl)pent-1-en-3-one + O2 = 4-methylsulfanyl-2-oxobutanoate + formate + 2 H(+). It participates in amino-acid biosynthesis; L-methionine biosynthesis via salvage pathway; L-methionine from S-methyl-5-thio-alpha-D-ribose 1-phosphate: step 5/6. Functionally, catalyzes 2 different reactions between oxygen and the acireductone 1,2-dihydroxy-3-keto-5-methylthiopentene (DHK-MTPene) depending upon the metal bound in the active site. Fe-containing acireductone dioxygenase (Fe-ARD) produces formate and 2-keto-4-methylthiobutyrate (KMTB), the alpha-ketoacid precursor of methionine in the methionine recycle pathway. Ni-containing acireductone dioxygenase (Ni-ARD) produces methylthiopropionate, carbon monoxide and formate, and does not lie on the methionine recycle pathway. The chain is Acireductone dioxygenase from Marinobacter nauticus (strain ATCC 700491 / DSM 11845 / VT8) (Marinobacter aquaeolei).